Here is a 569-residue protein sequence, read N- to C-terminus: Beta-lactamase-like protein 4 (569 aa).

The N-terminal stretch at methionine 1–serine 19 is a signal peptide. Residues asparagine 87, asparagine 172, asparagine 239, asparagine 240, asparagine 250, asparagine 299, asparagine 343, asparagine 412, asparagine 419, asparagine 436, asparagine 468, asparagine 509, and asparagine 535 are each glycosylated (N-linked (GlcNAc...) asparagine).

Belongs to the beta-lactamase family.

The protein localises to the secreted. In Dictyostelium discoideum (Social amoeba), this protein is Beta-lactamase-like protein 4.